A 192-amino-acid chain; its full sequence is Phosphomevalonate kinase (192 aa).

Residues 17–23 and R141 each bind ATP; that span reads KRKSGKD. Residue N170 participates in substrate binding. ATP is bound by residues H171 and Q180.

Monomer.

The protein localises to the cytoplasm. It is found in the cytosol. It catalyses the reaction (R)-5-phosphomevalonate + ATP = (R)-5-diphosphomevalonate + ADP. Its pathway is isoprenoid biosynthesis; isopentenyl diphosphate biosynthesis via mevalonate pathway; isopentenyl diphosphate from (R)-mevalonate: step 2/3. Its function is as follows. Catalyzes the reversible ATP-dependent phosphorylation of mevalonate 5-phosphate to produce mevalonate diphosphate and ADP, a key step in the mevalonic acid mediated biosynthesis of isopentenyl diphosphate and other polyisoprenoid metabolites. The protein is Phosphomevalonate kinase (PMVK) of Bos taurus (Bovine).